Consider the following 290-residue polypeptide: MSSPKFDSYDWENDPNWKEFTGTSTSINKLKEEYFKKNIDPNYKSSNNTTTQRPSTSSSSRTSSSSTSSPRATRAKPTFRRFLYGAWVIAQISVILFTLFYFISGNPYFFYKALLGATIAYSIPIFNTFEGRKPDRALAAQLVQDENAQFVFYCMIFYFFGSSSLVYLLPNFIYSFFHMLKIVIPYTSSVPFIKNLLEKVNSTNAKAIDFAISVEINIVLIAFFGIFSSFSNILLVFIYFRYLKLRYQFSQKIKSKINEYSQMVDQLSAHPSCPTFIRNIIPKIKMVLSR.

2 disordered regions span residues 1–22 (MSSPKFDSYDWENDPNWKEFTG) and 39–72 (IDPNYKSSNNTTTQRPSTSSSSRTSSSSTSSPRA). The span at 45 to 72 (SSNNTTTQRPSTSSSSRTSSSSTSSPRA) shows a compositional bias: low complexity. 4 helical membrane passes run 83–103 (LYGAWVIAQISVILFTLFYFI), 109–129 (FFYKALLGATIAYSIPIFNTF), 150–170 (FVFYCMIFYFFGSSSLVYLLP), and 218–238 (IVLIAFFGIFSSFSNILLVFI).

The protein belongs to the PER33/POM33 family.

The protein localises to the membrane. The sequence is that of Transmembrane protein 33 homolog (tmem33) from Dictyostelium discoideum (Social amoeba).